The primary structure comprises 386 residues: Bifunctional enzyme IspD/IspF (386 aa).

Residues M1–V229 form a 2-C-methyl-D-erythritol 4-phosphate cytidylyltransferase region. The segment at A230–G386 is 2-C-methyl-D-erythritol 2,4-cyclodiphosphate synthase. Positions 236 and 238 each coordinate a divalent metal cation. 4-CDP-2-C-methyl-D-erythritol 2-phosphate is bound by residues D236 to H238 and H261 to S262. Position 269 (H269) interacts with a divalent metal cation. 4-CDP-2-C-methyl-D-erythritol 2-phosphate is bound by residues D283 to G285, F288 to D292, T359 to E362, F366, and R369.

This sequence in the N-terminal section; belongs to the IspD/TarI cytidylyltransferase family. IspD subfamily. In the C-terminal section; belongs to the IspF family. A divalent metal cation is required as a cofactor.

The catalysed reaction is 2-C-methyl-D-erythritol 4-phosphate + CTP + H(+) = 4-CDP-2-C-methyl-D-erythritol + diphosphate. The enzyme catalyses 4-CDP-2-C-methyl-D-erythritol 2-phosphate = 2-C-methyl-D-erythritol 2,4-cyclic diphosphate + CMP. It functions in the pathway isoprenoid biosynthesis; isopentenyl diphosphate biosynthesis via DXP pathway; isopentenyl diphosphate from 1-deoxy-D-xylulose 5-phosphate: step 2/6. The protein operates within isoprenoid biosynthesis; isopentenyl diphosphate biosynthesis via DXP pathway; isopentenyl diphosphate from 1-deoxy-D-xylulose 5-phosphate: step 4/6. Functionally, bifunctional enzyme that catalyzes the formation of 4-diphosphocytidyl-2-C-methyl-D-erythritol from CTP and 2-C-methyl-D-erythritol 4-phosphate (MEP) (IspD), and catalyzes the conversion of 4-diphosphocytidyl-2-C-methyl-D-erythritol 2-phosphate (CDP-ME2P) to 2-C-methyl-D-erythritol 2,4-cyclodiphosphate (ME-CPP) with a corresponding release of cytidine 5-monophosphate (CMP) (IspF). The protein is Bifunctional enzyme IspD/IspF of Anaeromyxobacter dehalogenans (strain 2CP-C).